The sequence spans 453 residues: Ethanolamine ammonia-lyase large subunit (453 aa).

Substrate-binding positions include Arg160–Gln162 and Asn193. The adenosylcob(III)alamin site is built by Pro194 and Gln246. Glu287 provides a ligand contact to substrate. Ser295 provides a ligand contact to adenosylcob(III)alamin. A substrate-binding site is contributed by Asp362. Adenosylcob(III)alamin is bound at residue Met401.

Belongs to the EutB family. As to quaternary structure, the basic unit is a heterodimer which dimerizes to form tetramers. The heterotetramers trimerize; 6 large subunits form a core ring with 6 small subunits projecting outwards. Adenosylcob(III)alamin serves as cofactor.

The protein localises to the bacterial microcompartment. It catalyses the reaction ethanolamine = acetaldehyde + NH4(+). The protein operates within amine and polyamine degradation; ethanolamine degradation. In terms of biological role, catalyzes the deamination of various vicinal amino-alcohols to oxo compounds. It is spontaneously inactivated by its substrate and reactivated by EutA. May play a role in BMC assembly or maintenance. Expression of the eut operon allows this bacteria to use ethanolamine (EA) as a carbon, nitrogen and energy source. It relies on cobalamin (vitamin B12) both as a cofactor for the ethanolamine ammonia-lyase activity and to induce the operon. EA enhances bacterial survival in macrophages in a concentration-dependent manner, suggesting it is an important nutrient during infection. The polypeptide is Ethanolamine ammonia-lyase large subunit (Salmonella typhimurium (strain LT2 / SGSC1412 / ATCC 700720)).